The chain runs to 506 residues: MEKKTLSLCPICLKRIPATILEEDGKIIIKKTCPEHGEFKDIYWGDAELYKKFDKYEFIGKIEVTNTKVKNGCPYDCGLCPNHKSTTILANIDVTNRCNLNCPICFANANKSGKVYEPSFEDIKRMMENLRKEIPPTPAIQFAGGEPTVRSDLPELIKLARDMGFLHVQLATNGIKLKNINYLKKLKEAGLSTIYLQFDGISEKPYLVARGKNLLPIKQKVIENCKKVGFDSVVLVPTLVRGVNDNEVGGIIRYAAENVDVVRGINFQPVSFTGRVDEKTLLEGRITIPDFIKLVEEQTDGEITEEDFYPVPSVAPISVLVEKLTNDRKPTLSSHQHCGTSTYVFVDEDGKLIPITRFIDVEGFLEIVKEKIEEIGKSKMHDVKVLGEIALKLPSLIDLDKAPKSVNIKKIIDLILSVLKSDYSALAELHYHMLMISCMHFMDAYNFDVKRVMRCCIHYATPDDRIIPFCTYNTLHRQEVEEKFSIPLEEWKRMHKIGGEDDREDY.

Residues C73, C77, C80, C98, C102, and C105 each contribute to the [4Fe-4S] cluster site. The Radical SAM core domain maps to 82 to 300; it reads NHKSTTILAN…FIKLVEEQTD (219 aa).

This sequence belongs to the radical SAM superfamily. [4Fe-4S] cluster is required as a cofactor. It depends on S-adenosyl-L-methionine as a cofactor.

It participates in cofactor biosynthesis; 5,6,7,8-tetrahydromethanopterin biosynthesis. Functionally, is responsible for the addition of methyl groups at C-7 and C-9 of the pterin ring during methanopterin (MPT) biosynthesis. Catalyzes methylation of 7,8-dihydro-6-hydroxymethylpterin, likely using methylenetetrahydromethanopterin as a methyl group donor, via a radical-based mechanism. The sequence is that of 7,8-dihydro-6-hydroxymethylpterin dimethyltransferase from Methanocaldococcus jannaschii (strain ATCC 43067 / DSM 2661 / JAL-1 / JCM 10045 / NBRC 100440) (Methanococcus jannaschii).